The primary structure comprises 405 residues: Amino acid transporter AVT1I (405 aa).

11 helical membrane passes run 22–42 (CFNALNALSGIGILSVPYSLA), 46–66 (WLSLSLLLLLAVTAFYTSLLI), 93–113 (IIVSVFMHLELYLVTTGFLIL), 140–160 (FMATVAFVIMPTLWWDNLSVL), 169–189 (LATTVTLGSISWIGAFDGIGF), 201–221 (IPTALSLYAFCYGAHPVLPTL), 234–254 (VLLICFILCTIGYTSMAVLGY), 278–298 (VAIYTTLVNPVAKYALMITPT), 318–338 (LLISTFFIISSVVIAETLPFF), 343–363 (SLVGALLSVTVSILLPCLCYL), and 377–397 (IMLFGMVVMSVFVGVIGTYIA).

Belongs to the amino acid/polyamine transporter 2 family. Amino acid/auxin permease (AAAP) (TC 2.A.18.5) subfamily.

It localises to the membrane. The chain is Amino acid transporter AVT1I from Arabidopsis thaliana (Mouse-ear cress).